Reading from the N-terminus, the 288-residue chain is Bifunctional protein FolD (288 aa).

Residues 166 to 168 (GAS) and Ile-232 contribute to the NADP(+) site.

Belongs to the tetrahydrofolate dehydrogenase/cyclohydrolase family. Homodimer.

The enzyme catalyses (6R)-5,10-methylene-5,6,7,8-tetrahydrofolate + NADP(+) = (6R)-5,10-methenyltetrahydrofolate + NADPH. It carries out the reaction (6R)-5,10-methenyltetrahydrofolate + H2O = (6R)-10-formyltetrahydrofolate + H(+). Its pathway is one-carbon metabolism; tetrahydrofolate interconversion. Functionally, catalyzes the oxidation of 5,10-methylenetetrahydrofolate to 5,10-methenyltetrahydrofolate and then the hydrolysis of 5,10-methenyltetrahydrofolate to 10-formyltetrahydrofolate. This Salmonella enteritidis PT4 (strain P125109) protein is Bifunctional protein FolD.